The chain runs to 281 residues: MKNIGININTDKDISRNILDKIFQYIHEECSEAKIKVFYDSKGLDNEESRALDAVMVLGGDGTILGTARALAKYDVPIFGINRGHLGFLAEIELEDCKKAIKNLFKGQYKIEDRIMLKCDLKGIDKKDDFLALNDIVLTKGNLSRIVKYSIYVDDVWYTTFVADGVIVATPTGSTAYSLSAGGPIVYPDLDVLEIAPICPHSLGIRPILLNGNSKINIRVLKKYEDPVLTIDGQRYKKVTVNEVTISKSEYKCRLIKFKDKDYFKILRTKISYRSRECEGE.

Residue Asp-61 is the Proton acceptor of the active site. Residues 61-62 (DG), 134-135 (ND), Arg-145, Asp-164, 175-180 (TAYSLS), and Gln-234 each bind NAD(+).

This sequence belongs to the NAD kinase family. It depends on a divalent metal cation as a cofactor.

The protein localises to the cytoplasm. It carries out the reaction NAD(+) + ATP = ADP + NADP(+) + H(+). Functionally, involved in the regulation of the intracellular balance of NAD and NADP, and is a key enzyme in the biosynthesis of NADP. Catalyzes specifically the phosphorylation on 2'-hydroxyl of the adenosine moiety of NAD to yield NADP. The sequence is that of NAD kinase from Clostridium botulinum (strain ATCC 19397 / Type A).